The following is a 1733-amino-acid chain: Probable nuclear antigen (1733 aa).

Disordered regions lie at residues 1–41 (MNLF…THFT), 71–394 (PHPP…EQQV), 437–506 (AGAG…EGAQ), 520–548 (APAA…EGGA), 882–907 (LGGG…GAAL), 993–1141 (AGGP…EDAA), 1223–1242 (PERV…RGHA), 1348–1475 (GAGP…GRAG), 1585–1608 (SGGG…WGSG), and 1630–1665 (PRRR…RGGC). Basic residues predominate over residues 21–31 (DHHHQQHHHHP). The segment covering 77–97 (PQDHHRPTPARDHRDPRDHLP) has biased composition (basic and acidic residues). Positions 113–131 (TTTTTIKDPQHPQDPLLLP) are enriched in low complexity. The segment covering 135-147 (LQEEDPHLLRPTR) has biased composition (basic and acidic residues). The span at 179-189 (GGGPPSPPPRP) shows a compositional bias: pro residues. Residues 190-201 (STSSSSSHQGPP) show a composition bias toward low complexity. Over residues 202-220 (STRPPPPQRPPPRWPPPSP) the composition is skewed to pro residues. Polar residues predominate over residues 227-240 (RAGSENTAQTLFSH). Residues 272 to 299 (PPPSPPPRPPPPLPPPPPPPPPPQPPPA) are compositionally biased toward pro residues. The segment covering 316–326 (GGRRRGGKRRR) has biased composition (basic residues). Over residues 336 to 354 (DAEEEEDGDGDEDEDEDRA) the composition is skewed to acidic residues. The span at 355–364 (EGEGREDGGE) shows a compositional bias: basic and acidic residues. 3 stretches are compositionally biased toward gly residues: residues 365–374 (GPRGAGGGAG), 454–466 (GAPG…GLEG), and 479–494 (GGDG…GLGV). A compositionally biased stretch (low complexity) spans 495-506 (GLQQRRGAEGAQ). The segment covering 882 to 892 (LGGGGGGGQQR) has biased composition (gly residues). Low complexity predominate over residues 893–907 (GSGVRSGPESEGAAL). Composition is skewed to gly residues over residues 993–1004 (AGGPGAGEAGGG) and 1027–1043 (AGRG…LGEP). 2 stretches are compositionally biased toward basic and acidic residues: residues 1078–1087 (GAGDEGDRVR) and 1100–1112 (RVAE…RHLL). A compositionally biased stretch (gly residues) spans 1116-1127 (GPEGGRGAGGRG). A compositionally biased stretch (gly residues) spans 1385–1407 (GPGGLRGRGRGGRGGGGGGGGRG). Composition is skewed to basic residues over residues 1408 to 1420 (PRGR…RRWR) and 1444 to 1453 (RGGRGGRGGR). The span at 1454–1474 (GRGGGRAPRGGGGGPGGGGRA) shows a compositional bias: gly residues. The span at 1652 to 1665 (RGAGRAGGGGRGGC) shows a compositional bias: gly residues.

The polypeptide is Probable nuclear antigen (Sus scrofa (Pig)).